A 305-amino-acid polypeptide reads, in one-letter code: MAQVKRIRRNVSGIILLDKPLGFTSNAALQKVRWLLNAEKAGHTGSLDPLATGVLPLCFGEATKFSQYLLDSDKGYETLAQLGKTTTTADAEGEVLQTREVTVGRADIEAVLPEFRGEIKQIPPMYSALKRDGQPLYKLARAGEVVEREPRSVTIARLELLAFEGDTARLAVDCSKGTYIRTLVEDIGEKLGCGAYVAELRRTQAGPFSLAQTVTLEELEAVHAEGGNEAVDRFLMPSDSGLLDWPLLQFSEHSAFYWLNGQPVRAPDAPKFGMVRVQDHNGRFIGIGEVSEDGRIAPRRLIRSE.

Residue Asp48 is the Nucleophile of the active site.

Belongs to the pseudouridine synthase TruB family. Type 1 subfamily.

It catalyses the reaction uridine(55) in tRNA = pseudouridine(55) in tRNA. Its function is as follows. Responsible for synthesis of pseudouridine from uracil-55 in the psi GC loop of transfer RNAs. The chain is tRNA pseudouridine synthase B from Pseudomonas fluorescens (strain ATCC BAA-477 / NRRL B-23932 / Pf-5).